The primary structure comprises 477 residues: Cysteine--tRNA ligase (477 aa).

Cys29 provides a ligand contact to Zn(2+). Residues 31 to 41 (PTVYDYPHLGH) carry the 'HIGH' region motif. Residues Cys209, His234, and Glu238 each coordinate Zn(2+). The 'KMSKS' region signature appears at 266-270 (KMSKS). Lys269 contacts ATP.

The protein belongs to the class-I aminoacyl-tRNA synthetase family. Zn(2+) is required as a cofactor.

The protein localises to the cytoplasm. It catalyses the reaction tRNA(Cys) + L-cysteine + ATP = L-cysteinyl-tRNA(Cys) + AMP + diphosphate. This Pyrococcus abyssi (strain GE5 / Orsay) protein is Cysteine--tRNA ligase (cysS).